A 567-amino-acid polypeptide reads, in one-letter code: TGF-beta receptor type-2 (567 aa).

Positions 1 to 23 (MGRGLLRGLWPLHIVLWTRIAST) are cleaved as a signal peptide. Over 24–166 (IPPHVPKSVN…SPDLLLVIIQ (143 aa)) the chain is Extracellular. Intrachain disulfides connect cysteine 51–cysteine 84, cysteine 54–cysteine 71, cysteine 61–cysteine 67, cysteine 77–cysteine 101, cysteine 121–cysteine 136, and cysteine 138–cysteine 143. 2 N-linked (GlcNAc...) asparagine glycosylation sites follow: asparagine 70 and asparagine 94. The helical transmembrane segment at 167–187 (VTGVSLLPPLGIAIAVIIIFY) threads the bilayer. Topologically, residues 188-567 (CYRVHRQQKL…PEDGSLNTTK (380 aa)) are cytoplasmic. Residues 244 to 546 (IELDTLVGKG…RFSELEHPER (303 aa)) form the Protein kinase domain. ATP is bound by residues 250 to 258 (VGKGRFAEV) and lysine 277. Aspartate 379 (proton acceptor) is an active-site residue. A phosphoserine mark is found at serine 409, serine 548, and serine 553. The segment at 545-567 (ERLSGRSCSQEKIPEDGSLNTTK) is disordered.

This sequence belongs to the protein kinase superfamily. TKL Ser/Thr protein kinase family. TGFB receptor subfamily. As to quaternary structure, homodimer. Heterohexamer; TGFB1, TGFB2 and TGFB3 homodimeric ligands assemble a functional receptor composed of two TGFBR1 and TGFBR2 heterodimers to form a ligand-receptor heterohexamer. The respective affinity of TGFRB1 and TGFRB2 for the ligands may modulate the kinetics of assembly of the receptor and may explain the different biological activities of TGFB1, TGFB2 and TGFB3. Component of a complex composed of TSC22D1 (via N-terminus), TGFBR1 and TGFBR2; the interaction between TSC22D1 and TGFBR1 is inhibited by SMAD7 and promoted by TGFB1. Interacts with DAXX. Interacts with DYNLT4. Interacts with ZFYVE9; ZFYVE9 recruits SMAD2 and SMAD3 to the TGF-beta receptor. Interacts with and is activated by SCUBE3; this interaction does not affect TGFB1-binding to TGFBR2. Interacts with VPS39; this interaction is independent of the receptor kinase activity and of the presence of TGF-beta. Interacts with CLU. Requires Mg(2+) as cofactor. Mn(2+) is required as a cofactor. Phosphorylated on a Ser/Thr residue in the cytoplasmic domain. As to expression, widely expressed in adult. Expressed primarily in mesenchyme and epidermis of the midgestational fetus.

Its subcellular location is the cell membrane. It localises to the membrane raft. It catalyses the reaction L-threonyl-[receptor-protein] + ATP = O-phospho-L-threonyl-[receptor-protein] + ADP + H(+). The enzyme catalyses L-seryl-[receptor-protein] + ATP = O-phospho-L-seryl-[receptor-protein] + ADP + H(+). Transmembrane serine/threonine kinase forming with the TGF-beta type I serine/threonine kinase receptor, TGFBR1, the non-promiscuous receptor for the TGF-beta cytokines TGFB1, TGFB2 and TGFB3. Transduces the TGFB1, TGFB2 and TGFB3 signal from the cell surface to the cytoplasm and is thus regulating a plethora of physiological and pathological processes including cell cycle arrest in epithelial and hematopoietic cells, control of mesenchymal cell proliferation and differentiation, wound healing, extracellular matrix production, immunosuppression and carcinogenesis. The formation of the receptor complex composed of 2 TGFBR1 and 2 TGFBR2 molecules symmetrically bound to the cytokine dimer results in the phosphorylation and the activation of TGFRB1 by the constitutively active TGFBR2. Activated TGFBR1 phosphorylates SMAD2 which dissociates from the receptor and interacts with SMAD4. The SMAD2-SMAD4 complex is subsequently translocated to the nucleus where it modulates the transcription of the TGF-beta-regulated genes. This constitutes the canonical SMAD-dependent TGF-beta signaling cascade. Also involved in non-canonical, SMAD-independent TGF-beta signaling pathways. Its function is as follows. Has transforming growth factor beta-activated receptor activity. The protein is TGF-beta receptor type-2 (Tgfbr2) of Mus musculus (Mouse).